Reading from the N-terminus, the 207-residue chain is NADH-quinone oxidoreductase subunit A (207 aa).

A run of 3 helical transmembrane segments spans residues 6–26 (WSAIAFILAAIALVVFMLVVP), 62–82 (LVAIFFVIFDLEALYLYAYAV), and 87–107 (AGWLGFAAAAIFITILIIGLV).

It belongs to the complex I subunit 3 family. NDH-1 is composed of 14 different subunits. Subunits NuoA, H, J, K, L, M, N constitute the membrane sector of the complex.

Its subcellular location is the cell inner membrane. It catalyses the reaction a quinone + NADH + 5 H(+)(in) = a quinol + NAD(+) + 4 H(+)(out). Functionally, NDH-1 shuttles electrons from NADH, via FMN and iron-sulfur (Fe-S) centers, to quinones in the respiratory chain. The immediate electron acceptor for the enzyme in this species is believed to be ubiquinone. Couples the redox reaction to proton translocation (for every two electrons transferred, four hydrogen ions are translocated across the cytoplasmic membrane), and thus conserves the redox energy in a proton gradient. The chain is NADH-quinone oxidoreductase subunit A from Psychrobacter arcticus (strain DSM 17307 / VKM B-2377 / 273-4).